The sequence spans 777 residues: Homoaconitase, mitochondrial (777 aa).

Residues 1-35 (MFKRTGSLLLRCRASRVPVIGRPLISLSTSSTSLS) constitute a mitochondrion transit peptide. The segment at 47–74 (LRRYTEASSSTTQTSPSSSSWPAPDAAP) is disordered. Residues 52–74 (EASSSTTQTSPSSSSWPAPDAAP) are compositionally biased toward low complexity. Residues Cys-398, Cys-466, and Cys-469 each coordinate [4Fe-4S] cluster.

The protein belongs to the aconitase/IPM isomerase family. [4Fe-4S] cluster is required as a cofactor.

The protein resides in the mitochondrion. The enzyme catalyses (2R,3S)-homoisocitrate = cis-homoaconitate + H2O. It participates in amino-acid biosynthesis; L-lysine biosynthesis via AAA pathway; L-alpha-aminoadipate from 2-oxoglutarate: step 3/5. Functionally, catalyzes the reversible hydration of cis-homoaconitate to (2R,3S)-homoisocitrate, a step in the alpha-aminoadipate pathway for lysine biosynthesis. This chain is Homoaconitase, mitochondrial (lys4), found in Aspergillus fumigatus (strain ATCC MYA-4609 / CBS 101355 / FGSC A1100 / Af293) (Neosartorya fumigata).